The primary structure comprises 262 residues: tRNA pseudouridine synthase A (262 aa).

D54 acts as the Nucleophile in catalysis. Substrate is bound at residue Y113.

It belongs to the tRNA pseudouridine synthase TruA family. As to quaternary structure, homodimer.

It catalyses the reaction uridine(38/39/40) in tRNA = pseudouridine(38/39/40) in tRNA. Formation of pseudouridine at positions 38, 39 and 40 in the anticodon stem and loop of transfer RNAs. The protein is tRNA pseudouridine synthase A of Lactobacillus acidophilus (strain ATCC 700396 / NCK56 / N2 / NCFM).